Consider the following 172-residue polypeptide: Translation initiation factor IF-3 (172 aa).

The protein belongs to the IF-3 family. In terms of assembly, monomer.

The protein resides in the cytoplasm. In terms of biological role, IF-3 binds to the 30S ribosomal subunit and shifts the equilibrium between 70S ribosomes and their 50S and 30S subunits in favor of the free subunits, thus enhancing the availability of 30S subunits on which protein synthesis initiation begins. This chain is Translation initiation factor IF-3, found in Lactobacillus johnsonii (strain CNCM I-12250 / La1 / NCC 533).